The primary structure comprises 166 residues: Eukaryotic translation initiation factor 5A (166 aa).

A Hypusine modification is found at K52. Positions 99-125 (DREDPSKPAHLSLMDDEGETRDNLDMP) are disordered.

This sequence belongs to the eIF-5A family. Lys-52 undergoes hypusination, a unique post-translational modification that consists in the addition of a butylamino group from spermidine to lysine side chain, leading to the formation of the unusual amino acid hypusine. eIF-5As are the only known proteins to undergo this modification, which is essential for their function. Hypusination is mediated by the consecutive action of deoxyhypusine synthase DHSc and deoxyhypusine hydroxylase DOHH.

Its subcellular location is the cytoplasm. Translation factor that promotes translation elongation and termination, particularly upon ribosome stalling at specific amino acid sequence contexts. Binds between the exit (E) and peptidyl (P) site of the ribosome and promotes rescue of stalled ribosome: specifically required for efficient translation of polyproline-containing peptides as well as other motifs that stall the ribosome. Acts as a ribosome quality control (RQC) cofactor by joining the RQC complex to facilitate peptidyl transfer during CAT tailing step. Required for cell growth during both bloodstream (BF) and insect procyclic (PF) life cycle stages and for survival of the bloodstream form. The chain is Eukaryotic translation initiation factor 5A from Trypanosoma brucei brucei (strain 927/4 GUTat10.1).